The chain runs to 178 residues: uncharacterized protein (178 aa).

Belongs to the mimivirus L114/R131 family.

This is an uncharacterized protein from Acanthamoeba polyphaga mimivirus (APMV).